A 493-amino-acid chain; its full sequence is Protein translocase subunit SecY (493 aa).

At 1–21 the chain is on the cytoplasmic side; it reads MDSVIRALQPYFERIPSVERP. The chain crosses the membrane as a helical span at residues 22 to 48; that stretch reads KGHVHFREKFGWTAAILLLYFILSNVP. The Extracellular portion of the chain corresponds to 49-59; it reads VFGLSPESIDI. The helical intramembrane region spans 60–67; it reads FAAYRALF. A discontinuously helical transmembrane segment spans residues 60–88; the sequence is FAAYRALFAGSTGSIIALGIGPIVTASII. The stretch at 68-79 is an intramembrane region; it reads AGSTGSIIALGI. An intramembrane region (helical) is located at residues 80-88; that stretch reads GPIVTASII. The Cytoplasmic segment spans residues 89–109; the sequence is LQLLVGAGIIKLDLTNPEDRA. A helical membrane pass occupies residues 110 to 134; sequence AYQDFQRFLVFVMIAVEAIPQIAGG. Residues 135-151 are Extracellular-facing; it reads LLKPDLNLAAQLGVSPG. Residues 152–176 traverse the membrane as a helical segment; the sequence is IISFLIFIQLFIGGVLIVYMDEVVS. The Cytoplasmic segment spans residues 177-182; that stretch reads KWGIGS. Residues 183–201 form a helical membrane-spanning segment; it reads GVSLFILAGIAQSIVVGLF. Topologically, residues 202–244 are extracellular; it reads NWVIPPNSAMPAGIIPRWIWIAQNYPLDQLFTGSGLAFLLIQG. The helical transmembrane segment at 245–266 threads the bilayer; sequence GILALITTAAIILLVVFFEGTR. Residues 267 to 291 lie on the Cytoplasmic side of the membrane; that stretch reads VEIPLAHAVARGARGRFPIKLIYAS. Residues 292–313 traverse the membrane as a helical segment; sequence VLPMIFVRALQANVVALGQVLH. Residues 314–367 are Extracellular-facing; that stretch reads ARGVTIFGEFVNGKAVSGLMFFLQPVSSPYDWIPSLVKSQGAAFAAIPDWMIYL. The helical transmembrane segment at 368–387 threads the bilayer; sequence HLLIDALILVVGGIIFAWFW. Topologically, residues 388 to 430 are cytoplasmic; the sequence is VETSGMDARTVASQIAKSGMQVPGFRKSPQVLERVLSRYIPKV. A helical transmembrane segment spans residues 431 to 449; sequence TILGGAIIGILTLVANMLG. The Extracellular portion of the chain corresponds to 450-454; sequence TIGNV. A helical transmembrane segment spans residues 455-469; sequence SGTGLLLAVSIAYRF. Over 470 to 493 the chain is Cytoplasmic; it reads YEDLAKEQLTEMHPLIRRMLGEEA.

The protein belongs to the SecY/SEC61-alpha family. Component of the Sec protein translocase complex. Heterotrimer consisting of alpha (SecY), beta (SecG) and gamma (SecE) subunits. The heterotrimers can form oligomers, although 1 heterotrimer is thought to be able to translocate proteins. Interacts with the ribosome. May interact with SecDF, and other proteins may be involved.

Its subcellular location is the cell membrane. In terms of biological role, the central subunit of the protein translocation channel SecYEG. Consists of two halves formed by TMs 1-5 and 6-10. These two domains form a lateral gate at the front which open onto the bilayer between TMs 2 and 7, and are clamped together by SecE at the back. The channel is closed by both a pore ring composed of hydrophobic SecY resides and a short helix (helix 2A) on the extracellular side of the membrane which forms a plug. The plug probably moves laterally to allow the channel to open. The ring and the pore may move independently. The sequence is that of Protein translocase subunit SecY from Archaeoglobus fulgidus (strain ATCC 49558 / DSM 4304 / JCM 9628 / NBRC 100126 / VC-16).